Reading from the N-terminus, the 153-residue chain is Small ribosomal subunit protein uS13 (153 aa).

Residues 132-153 (VRGQRTRSHHRKGRTVGVIKKK) form a disordered region. The span at 135-153 (QRTRSHHRKGRTVGVIKKK) shows a compositional bias: basic residues.

The protein belongs to the universal ribosomal protein uS13 family. In terms of assembly, part of the 30S ribosomal subunit. Forms a loose heterodimer with protein S19. Forms two bridges to the 50S subunit in the 70S ribosome.

Functionally, located at the top of the head of the 30S subunit, it contacts several helices of the 16S rRNA. In the 70S ribosome it contacts the 23S rRNA (bridge B1a) and protein L5 of the 50S subunit (bridge B1b), connecting the 2 subunits; these bridges are implicated in subunit movement. This chain is Small ribosomal subunit protein uS13, found in Nanoarchaeum equitans (strain Kin4-M).